The following is a 549-amino-acid chain: Cell death protein 4 (549 aa).

The 91-residue stretch at 1-91 (MLCEIECRAL…HLADFLEDYI (91 aa)) folds into the CARD domain. Y131, G162, G164, K165, S166, V167, R273, T367, and Y369 together coordinate ATP. The NB-ARC domain maps to 133-417 (REYHVDRVIK…KLWSCVIPVD (285 aa)). Mg(2+) is bound at residue S166.

Associates as an asymmetric homodimer with ced-9. Only one ced-4 molecule within the dimer interacts directly with ced-9. Upon release from ced-9, forms a multimer, known as the apoptosome, and interacts with ced-3; the interaction results in ced-3 autoproteolytic cleavage and activation. Multiple oligomeric states of the apoptosome are observed including hexamers, heptamers and octamers. The hexamers likely represent a pre-mature state of the apoptosome and may contribute to the regulation of ced-3 activation. The apoptosome multimer also interacts with two processed ced-3 to form a stable holoenzyme. Interacts with sex-determining protein fem-1. May form a complex composed of ced-3, ced-4 and mac-1 or of ced-9, ced-4 and mac-1. Within the complex, interacts with mac-1.

It is found in the mitochondrion. Its subcellular location is the cytoplasm. It localises to the perinuclear region. Its function is as follows. Component of the egl-1, ced-9, ced-4 and ced-3 apoptotic signaling cascade required for the initiation of programmed cell death in cells fated to die during embryonic and postembryonic development. During oogenesis, required for germline apoptosis downstream of ced-9 and upstream of ced-3 but independently of egl-1. May regulate germline apoptosis in response to DNA damage, probably downstream of let-60/ras and mpk-1 pathway. Regulates CEP neuron apoptosis in response to high Al(3+) levels. During male tail morphogenesis, promotes apoptosis of the tail-spike cell upstream of ced-3 but independently of egl-1 and ced-9. May play a role in sex-specific cell apoptosis, probably by promoting ced-3-mediated cleavage of sex-determining protein fem-1. During larval development, required for the elimination of transient presynaptic components downstream of egl-1 and ced-9 and upstream of ced-3 apoptotic pathway. Downstream of calreticulin crt-1 and upstream of ced-3 and independently of egl-1 and ced-9, plays a role in the initial steps of axonal regrowth following axotomy. Together with ain-1, a component of the miRNA-induced-silencing complex (miRISC), and probably upstream of ced-3, regulates temporal cell fate patterning during larval development. May play a role in resistance to S.typhimurium-mediated infection. In terms of biological role, plays a major role in programmed cell death. egl-1 binds to and directly inhibits the activity of ced-9, releasing the cell death activator ced-4 from a ced-9/ced-4-containing protein complex and allowing ced-4 to induce caspase ced-3 autoproteolytic cleavage and activation. Also forms a holoenzyme with processed ced-3 enhancing ced-3 activity. Prevents programmed cell death. The chain is Cell death protein 4 (ced-4) from Caenorhabditis elegans.